Here is a 416-residue protein sequence, read N- to C-terminus: Solute carrier family 35 member D3 (416 aa).

A run of 10 helical transmembrane segments spans residues 9-29 (VLGI…NILL), 38-58 (FSFL…SLEL), 64-84 (LIAV…VAVL), 103-123 (MYVV…VLVL), 131-151 (GVLA…AGDL), 155-175 (PIGY…LVLI), 187-207 (LTAQ…CSFA), 224-244 (AMVC…FTTL), 257-277 (FVGV…FSDV), and 280-300 (TSLF…YCVA). The segment at 334-384 (MEELPGEGGNGRSEGGEAAGGPAQESRQEVRGSPRGVPLVAGSSEEGSRRS) is disordered. Residues 339 to 352 (GEGGNGRSEGGEAA) show a composition bias toward gly residues.

It belongs to the TPT transporter family. SLC35D subfamily. As to quaternary structure, could interact with ATG14, BECN1 and PIK3C3 that form the PI3KC3-C1/AIC/autophagy initiation complex; enhancing the formation of the AIC and promoting autophagy.

It is found in the cytoplasmic vesicle. The protein resides in the secretory vesicle. The protein localises to the synaptic vesicle membrane. It localises to the early endosome membrane. Its subcellular location is the endoplasmic reticulum membrane. The catalysed reaction is UDP-alpha-D-glucose(in) = UDP-alpha-D-glucose(out). With respect to regulation, inhibited by proton uncouplers that directly abolish the proton electrochemical gradient. In terms of biological role, probable UDP-glucose transmembrane transporter involved in UDP-glucose transport from the cytosol to the lumen of synaptic vesicles. It is involved in platelet dense granules maturation. Functionally, alternatively, could function as a molecular adapter enhancing the formation of the PI3KC3-C1/AIC/autophagy initiation complex to promote autophagy in dopaminergic neurons. Could also regulate the plasma membrane localization of the D(1A) dopamine receptor/DRD1 and dopamine signaling. This is Solute carrier family 35 member D3 from Homo sapiens (Human).